Reading from the N-terminus, the 555-residue chain is Dynein regulatory complex protein 11 (555 aa).

2 consecutive IQ domains span residues 154 to 183 (EDEAILMIQKNERGRQARERARLAAITKRQ) and 199 to 226 (HEEAARKIQAAIRGFLWRRRIKKEADKE). 4 disordered regions span residues 232-255 (MKPKPRDPKRDPQMGEAKNLMRRK), 299-377 (KRNP…EQKI), 450-469 (AAKLGKKGKKKKGKKKEPFS), and 501-555 (AKKD…SCGA). Basic and acidic residues-rich tracts occupy residues 235–244 (KPRDPKRDPQ) and 338–367 (GDGKGKGKDGKGDAKKDAKKDPKKDKKGGG). A compositionally biased stretch (basic residues) spans 452 to 464 (KLGKKGKKKKGKK). Basic and acidic residues predominate over residues 501-521 (AKKDEKDAAGDGKGKGKDGKG). Over residues 537 to 546 (KKKKGGKKKS) the composition is skewed to basic residues.

Belongs to the AAA ATPase family. DRC11 subfamily. Component of the nexin-dynein regulatory complex (N-DRC). Interacts with DRC5.

Its subcellular location is the cytoplasm. It is found in the cytoskeleton. The protein localises to the flagellum axoneme. Component of the nexin-dynein regulatory complex (N-DRC), a key regulator of ciliary/flagellar motility which maintains the alignment and integrity of the distal axoneme and regulates microtubule sliding in motile axonemes. The chain is Dynein regulatory complex protein 11 from Chlamydomonas reinhardtii (Chlamydomonas smithii).